Here is a 476-residue protein sequence, read N- to C-terminus: Membrane-bound lytic murein transglycosylase F (476 aa).

The first 22 residues, 1 to 22 (MTRFLFALILGFLLTACQQVTV), serve as a signal peptide directing secretion. Positions 23-257 (DETEFVPKKL…HLNEKYFGHV (235 aa)) are non-LT domain. Positions 258 to 476 (KRFDYVDTRA…AGTLSPEQPK (219 aa)) are LT domain. Glu302 is an active-site residue. The disordered stretch occupies residues 446 to 476 (SKQQNPEEEPSDLASEEPAIPAGTLSPEQPK). Positions 451-460 (PEEEPSDLAS) are enriched in acidic residues.

The protein in the N-terminal section; belongs to the bacterial solute-binding protein 3 family. In the C-terminal section; belongs to the transglycosylase Slt family.

It localises to the cell outer membrane. It catalyses the reaction Exolytic cleavage of the (1-&gt;4)-beta-glycosidic linkage between N-acetylmuramic acid (MurNAc) and N-acetylglucosamine (GlcNAc) residues in peptidoglycan, from either the reducing or the non-reducing ends of the peptidoglycan chains, with concomitant formation of a 1,6-anhydrobond in the MurNAc residue.. Its function is as follows. Murein-degrading enzyme that degrades murein glycan strands and insoluble, high-molecular weight murein sacculi, with the concomitant formation of a 1,6-anhydromuramoyl product. Lytic transglycosylases (LTs) play an integral role in the metabolism of the peptidoglycan (PG) sacculus. Their lytic action creates space within the PG sacculus to allow for its expansion as well as for the insertion of various structures such as secretion systems and flagella. The polypeptide is Membrane-bound lytic murein transglycosylase F (Shewanella baltica (strain OS155 / ATCC BAA-1091)).